The following is a 100-amino-acid chain: Small ribosomal subunit protein uS14c (100 aa).

It belongs to the universal ribosomal protein uS14 family. As to quaternary structure, part of the 30S ribosomal subunit.

It localises to the plastid. The protein localises to the chloroplast. Functionally, binds 16S rRNA, required for the assembly of 30S particles. The chain is Small ribosomal subunit protein uS14c from Arabis hirsuta (Hairy rock-cress).